We begin with the raw amino-acid sequence, 311 residues long: Aquaporin Lacbi1:392091 (311 aa).

Residues 1-16 are Cytoplasmic-facing; it reads MHPQVASLFDNVYEDL. Residues 17-37 traverse the membrane as a helical segment; the sequence is AAATLEFIGTAFFLLFGLGGI. The Extracellular portion of the chain corresponds to 38–56; sequence QASTAEDTASGQPPASGIE. The helical transmembrane segment at 57 to 77 threads the bilayer; the sequence is HVLYISTCMGLSLVVSAWLFF. Residue Arg-78 is a topological domain, cytoplasmic. The helical transmembrane segment at 79 to 99 threads the bilayer; it reads VTGGLFNPNISFALLLVGGLK. The NPA 1 motif lies at 85–87; sequence NPN. A topological domain (extracellular) is located at residue Pro-100. Residues 101–121 traverse the membrane as a helical segment; it reads LRFVLFCIAQLTGAIAGAAIV. The Cytoplasmic portion of the chain corresponds to 122–143; sequence RGLTSAPLSVNNVLQQGTSAAQ. Residues 144–164 traverse the membrane as a helical segment; it reads GVFIEMFITAALVLSVLMLAA. Over 165–168 the chain is Extracellular; it reads EKHE. A helical transmembrane segment spans residues 169–189; sequence ATPFAPVGIGLTLFACHLFAV. Topologically, residues 190–215 are cytoplasmic; it reads YYTGAAMNSARAFGPAVISGFPEPQH. The NPA 2 motif lies at 197 to 199; it reads NSA. The chain crosses the membrane as a helical span at residues 216-236; the sequence is WVYWVGPFLGSLLGAGFYATL. Residues 237–311 lie on the Extracellular side of the membrane; it reads KHYKYWHLNP…TSSRTNFSPV (75 aa). The disordered stretch occupies residues 276–311; the sequence is DEETRNGCASNEEGVRATGDEKSSNATSSRTNFSPV. Residues 288–298 are compositionally biased toward basic and acidic residues; the sequence is EGVRATGDEKS. The segment covering 299-311 has biased composition (polar residues); it reads SNATSSRTNFSPV. An N-linked (GlcNAc...) asparagine glycan is attached at Asn-300.

This sequence belongs to the MIP/aquaporin (TC 1.A.8) family.

It is found in the membrane. The catalysed reaction is H2O(in) = H2O(out). It carries out the reaction NH4(+)(in) = NH4(+)(out). Its function is as follows. Water channel required to facilitate the transport of water across membranes. Also enables low but statistically significant ammonium permeability. May be involved in fungal nitrogen (ammonium) support of the plant host in symbiosis. This chain is Aquaporin Lacbi1:392091, found in Laccaria bicolor (strain S238N-H82 / ATCC MYA-4686) (Bicoloured deceiver).